The sequence spans 380 residues: Cytochrome b (380 aa).

4 helical membrane passes run 34-54, 78-99, 114-134, and 179-199; these read FGSLLAVCLATQILTGLLLAM, WLIRNLHANGASFFFICIFLHI, WNTGVILLLTLMATAFVGYVL, and FFALHFLLPFVIAGITVTHLM. Positions 84 and 98 each coordinate heme b. 2 residues coordinate heme b: His-183 and His-197. His-202 contacts a ubiquinone. A run of 4 helical transmembrane segments spans residues 227–247, 289–309, 321–341, and 348–368; these read LKDILGLALMLTPFLTLALFS, LGGVLALAASVLILLLIPFLH, LSQALFWLLVANLLILTWVGS, and FIIIGQMASFSYFTILLSLLP.

It belongs to the cytochrome b family. As to quaternary structure, the cytochrome bc1 complex contains 11 subunits: 3 respiratory subunits (MT-CYB, CYC1 and UQCRFS1), 2 core proteins (UQCRC1 and UQCRC2) and 6 low-molecular weight proteins (UQCRH/QCR6, UQCRB/QCR7, UQCRQ/QCR8, UQCR10/QCR9, UQCR11/QCR10 and a cleavage product of UQCRFS1). This cytochrome bc1 complex then forms a dimer. Heme b serves as cofactor.

Its subcellular location is the mitochondrion inner membrane. Component of the ubiquinol-cytochrome c reductase complex (complex III or cytochrome b-c1 complex) that is part of the mitochondrial respiratory chain. The b-c1 complex mediates electron transfer from ubiquinol to cytochrome c. Contributes to the generation of a proton gradient across the mitochondrial membrane that is then used for ATP synthesis. The polypeptide is Cytochrome b (MT-CYB) (Crossoptilon crossoptilon (White-eared pheasant)).